The primary structure comprises 321 residues: Tetraacyldisaccharide 4'-kinase (321 aa).

Ser54–Thr61 serves as a coordination point for ATP.

This sequence belongs to the LpxK family.

The catalysed reaction is a lipid A disaccharide + ATP = a lipid IVA + ADP + H(+). The protein operates within glycolipid biosynthesis; lipid IV(A) biosynthesis; lipid IV(A) from (3R)-3-hydroxytetradecanoyl-[acyl-carrier-protein] and UDP-N-acetyl-alpha-D-glucosamine: step 6/6. Transfers the gamma-phosphate of ATP to the 4'-position of a tetraacyldisaccharide 1-phosphate intermediate (termed DS-1-P) to form tetraacyldisaccharide 1,4'-bis-phosphate (lipid IVA). This Rickettsia conorii (strain ATCC VR-613 / Malish 7) protein is Tetraacyldisaccharide 4'-kinase.